The following is a 598-amino-acid chain: Elongation factor 4 (598 aa).

One can recognise a tr-type G domain in the interval 2 to 184 (DNVRNFAIIA…AIITKLPAPQ (183 aa)). GTP-binding positions include 14-19 (DHGKST) and 131-134 (NKVD).

It belongs to the TRAFAC class translation factor GTPase superfamily. Classic translation factor GTPase family. LepA subfamily.

The protein localises to the cell membrane. The catalysed reaction is GTP + H2O = GDP + phosphate + H(+). Its function is as follows. Required for accurate and efficient protein synthesis under certain stress conditions. May act as a fidelity factor of the translation reaction, by catalyzing a one-codon backward translocation of tRNAs on improperly translocated ribosomes. Back-translocation proceeds from a post-translocation (POST) complex to a pre-translocation (PRE) complex, thus giving elongation factor G a second chance to translocate the tRNAs correctly. Binds to ribosomes in a GTP-dependent manner. This Wolbachia sp. subsp. Brugia malayi (strain TRS) protein is Elongation factor 4.